The chain runs to 435 residues: uncharacterized protein (435 aa).

The next 9 membrane-spanning stretches (helical) occupy residues 40 to 60, 103 to 123, 133 to 153, 195 to 215, 226 to 246, 313 to 333, 358 to 378, 381 to 401, and 414 to 434; these read LVSTWLVVWGIWHVYFVEAVF, VLWTSITVWLIALAVVVWLIL, IMLALLVPVLPFAFSYAIYNP, LIHEAIPLEFALGAVLAIIVL, ICTALAIGPGTVSVLLLAVVG, VAVVGFRALFGAFLLGLLFFV, LALPVLASALLVPLFITAVDW, WWVMITLDVAIVYILYAIDRP, and VFVCVVLVLAVIPTGSANNIG.

It is found in the cell membrane. This is an uncharacterized protein from Mycobacterium bovis (strain ATCC BAA-935 / AF2122/97).